The following is a 174-amino-acid chain: MTLILGIDPGSRITGFGVVRQTARGCEYVASGCIRTGGGELHERLQIVFRGVSEIIRQHGPVTMGIERVFMARNADSALKLGQARGAAIVAAAEAGLEIAEYSASQVKQAVAGTGGANKEQVMMMVMHLLKLTQKPQIDASDALAIALCHAHTRSSLIPHGLATARRRGGRLRL.

Residues aspartate 8, glutamate 67, and aspartate 139 contribute to the active site. Mg(2+) contacts are provided by aspartate 8, glutamate 67, and aspartate 139.

The protein belongs to the RuvC family. In terms of assembly, homodimer which binds Holliday junction (HJ) DNA. The HJ becomes 2-fold symmetrical on binding to RuvC with unstacked arms; it has a different conformation from HJ DNA in complex with RuvA. In the full resolvosome a probable DNA-RuvA(4)-RuvB(12)-RuvC(2) complex forms which resolves the HJ. Mg(2+) serves as cofactor.

It is found in the cytoplasm. It carries out the reaction Endonucleolytic cleavage at a junction such as a reciprocal single-stranded crossover between two homologous DNA duplexes (Holliday junction).. Its function is as follows. The RuvA-RuvB-RuvC complex processes Holliday junction (HJ) DNA during genetic recombination and DNA repair. Endonuclease that resolves HJ intermediates. Cleaves cruciform DNA by making single-stranded nicks across the HJ at symmetrical positions within the homologous arms, yielding a 5'-phosphate and a 3'-hydroxyl group; requires a central core of homology in the junction. The consensus cleavage sequence is 5'-(A/T)TT(C/G)-3'. Cleavage occurs on the 3'-side of the TT dinucleotide at the point of strand exchange. HJ branch migration catalyzed by RuvA-RuvB allows RuvC to scan DNA until it finds its consensus sequence, where it cleaves and resolves the cruciform DNA. This chain is Crossover junction endodeoxyribonuclease RuvC, found in Pseudomonas entomophila (strain L48).